Here is a 422-residue protein sequence, read N- to C-terminus: MEFMAATTSIADTDMEFDKNVPRICGVCGDKATGFHFNAMTCEGCKGFFRRSMKRKAMFTCPFNGDCRITKDNRRHCQSCRLKRCVDIGMMKEFILTDEEVQRKRQMINKRKSEEALKESMRPKISDEQQKMIDILLEAHRKTFDTTYSDFNKFRPPVRENVDPFRRITRSSSVHTQGSPSEDSDVFTSSPDSSEHGFFSASLFGQFEYSSMGGKSGELSMLPHIADLVSYSIQKIIGFAKMIPGFRDLIAEDQIALLKSSVIEVIMLRSNQSFSLDDMSWTCGSEDFKYKVDDVTQAGHNMELLEPLVKFQVGLKKLDLHEEEHVLLMAICILSPDRPGLQDKALVESIQDRLSSTLQTYILCKHPPPGSRLLYAKMIQKLADLRSLNEEHSKQYRSISFLPEHSMKLTPLMLEVFSDEIP.

A DNA-binding region (nuclear receptor) is located at residues 22–90 (PRICGVCGDK…RLKRCVDIGM (69 aa)). Positions 25, 28, 42, 45, 61, 67, 77, and 80 each coordinate Zn(2+). 2 NR C4-type zinc fingers span residues 25 to 45 (CGVCGDKATGFHFNAMTCEGC) and 61 to 85 (CPFNGDCRITKDNRRHCQSCRLKRC). The tract at residues 98–127 (DEEVQRKRQMINKRKSEEALKESMRPKISD) is hinge. Positions 128 to 418 (EQQKMIDILL…LTPLMLEVFS (291 aa)) constitute an NR LBD domain. A disordered region spans residues 170-191 (RSSSVHTQGSPSEDSDVFTSSP). A calcitriol-binding site is contributed by S232. Residues 241-259 (KMIPGFRDLIAEDQIALLK) are interaction with coactivator LXXLL motif. Calcitriol-binding residues include R269, S273, H300, and H392. A 9aaTAD motif is present at residues 411–419 (PLMLEVFSD).

The protein belongs to the nuclear hormone receptor family. NR1 subfamily. Homodimer in the absence of bound vitamin D3. Heterodimer with RXRA after vitamin D3 binding. Detected in all tissues examined. Highest level in small intestine and skin.

Its subcellular location is the nucleus. It is found in the cytoplasm. Functionally, nuclear receptor for calcitriol, the active form of vitamin D3 which mediates the action of this vitamin on cells. Enters the nucleus upon vitamin D3 binding where it forms heterodimers with the retinoid X receptor/RXR. The VDR-RXR heterodimers bind to specific response elements on DNA and activate the transcription of vitamin D3-responsive target genes. Plays a central role in calcium homeostasis. Also functions as a receptor for the secondary bile acid lithocholic acid (LCA) and its metabolites. This is Vitamin D3 receptor (vdr) from Xenopus laevis (African clawed frog).